Here is a 685-residue protein sequence, read N- to C-terminus: UvrABC system protein B (685 aa).

The 382-residue stretch at 39-420 (EGIGDGLMYQ…TYEAEHQGQV (382 aa)) folds into the Helicase ATP-binding domain. 52-59 (GVTGSGKT) contacts ATP. The short motif at 105–128 (YYDYYQPEAYVPSRDLFIEKDSSI) is the Beta-hairpin element. The region spanning 443-596 (QVDDLLSEAK…QIAFNQANGI (154 aa)) is the Helicase C-terminal domain. The 36-residue stretch at 640 to 675 (AKSIRKLEKEMQEHARNLEFEKAAAARDELFRLRQR) folds into the UVR domain.

It belongs to the UvrB family. In terms of assembly, forms a heterotetramer with UvrA during the search for lesions. Interacts with UvrC in an incision complex.

It is found in the cytoplasm. The UvrABC repair system catalyzes the recognition and processing of DNA lesions. A damage recognition complex composed of 2 UvrA and 2 UvrB subunits scans DNA for abnormalities. Upon binding of the UvrA(2)B(2) complex to a putative damaged site, the DNA wraps around one UvrB monomer. DNA wrap is dependent on ATP binding by UvrB and probably causes local melting of the DNA helix, facilitating insertion of UvrB beta-hairpin between the DNA strands. Then UvrB probes one DNA strand for the presence of a lesion. If a lesion is found the UvrA subunits dissociate and the UvrB-DNA preincision complex is formed. This complex is subsequently bound by UvrC and the second UvrB is released. If no lesion is found, the DNA wraps around the other UvrB subunit that will check the other stand for damage. In Aromatoleum aromaticum (strain DSM 19018 / LMG 30748 / EbN1) (Azoarcus sp. (strain EbN1)), this protein is UvrABC system protein B.